Reading from the N-terminus, the 451-residue chain is Cobalamin reductase PduS (451 aa).

4Fe-4S ferredoxin-type domains are found at residues 255–284 and 300–330; these read TVLS…HELS and PQLL…MRIN. Positions 264, 267, 270, 274, 309, 312, 315, and 320 each coordinate [4Fe-4S] cluster.

It belongs to the PduS cobalamin reductase family. In terms of assembly, monomeric when purified anaerobically, dimeric under aerobic conditions. Forms a complex with PduO. Interacts with PduT, probably via the N-terminus of PduS. [4Fe-4S] cluster is required as a cofactor. FMN serves as cofactor.

Its subcellular location is the bacterial microcompartment. It functions in the pathway polyol metabolism; 1,2-propanediol degradation. A protein that aids in conversion of cob(III)alamin to cob(II)alamin and then to cob(I)alamin in the bacterial microcompartment (BMC) dedicated to 1,2-propanediol (1,2-PD) degradation. The latter step requires PduO. No free cob(I)alamin is released, suggesting a complex is formed with PduO that finishes conversion to adenosylcobalamin. PduS and PduO allow regeneration of the adenosylcobalamin cofactor within the BMC. Another study showed reduction of cob(II)alamin to cob(I)alamin in the absence of PduO. Both reactions require NADH. Cyanocobalamin (CN-Cbl) is not a substrate for the first reaction. Cobalamin reduction probably occurs spontaneously in the presence of free reduced flavin nucleotides, this protein may be involved in electron transfer for this reduction. In terms of biological role, the 1,2-PD-specific bacterial microcompartment (BMC) concentrates low levels of 1,2-PD catabolic enzymes, concentrates volatile reaction intermediates thus enhancing pathway flux and keeps the level of toxic, mutagenic propionaldehyde low. The polypeptide is Cobalamin reductase PduS (Salmonella typhimurium (strain LT2 / SGSC1412 / ATCC 700720)).